Reading from the N-terminus, the 418-residue chain is F-box/LRR-repeat protein 14 (418 aa).

The 47-residue stretch at 2-48 (ETHISCLFPELLAMIFGYLDVRDKGRAAQVCTAWRDAAYHKSVWRGV) folds into the F-box domain. Residues 2–48 (ETHISCLFPELLAMIFGYLDVRDKGRAAQVCTAWRDAAYHKSVWRGV) are required for down-regulation of SNAI1. LRR repeat units follow at residues 144 to 163 (GLEV…GLLL), 170 to 191 (RLKS…GHLA), 203 to 225 (GLEQ…HISR), 229 to 250 (GLRL…LHLS), and 254 to 275 (SLRS…MHLA).

In terms of assembly, part of a SCF (SKP1-cullin-F-box) ubiquitin-protein ligase complex. Interacts with SKP1 and CUL1. Interacts with SNAI1; the interaction requires the phosphorylation of the two serine residues in the substrate destruction motif D-S-G-X(2,3,4)-S.

The protein localises to the cytoplasm. In terms of biological role, substrate-recognition component of some SCF (SKP1-CUL1-F-box protein)-type E3 ubiquitin-protein ligase complexes. The SCF(FBXL14) complex acts by mediating ubiquitination and subsequent degradation of SNAI1. The protein is F-box/LRR-repeat protein 14 (FBXL14) of Homo sapiens (Human).